Reading from the N-terminus, the 292-residue chain is ATP synthase gamma chain (292 aa).

This sequence belongs to the ATPase gamma chain family. F-type ATPases have 2 components, CF(1) - the catalytic core - and CF(0) - the membrane proton channel. CF(1) has five subunits: alpha(3), beta(3), gamma(1), delta(1), epsilon(1). CF(0) has three main subunits: a, b and c.

The protein resides in the cell inner membrane. Produces ATP from ADP in the presence of a proton gradient across the membrane. The gamma chain is believed to be important in regulating ATPase activity and the flow of protons through the CF(0) complex. This Nitrobacter hamburgensis (strain DSM 10229 / NCIMB 13809 / X14) protein is ATP synthase gamma chain.